The primary structure comprises 673 residues: UvrABC system protein B (673 aa).

The Helicase ATP-binding domain occupies 26–414; it reads EGLEDGLAHQ…GDEVVDQVVR (389 aa). Residue 39 to 46 coordinates ATP; it reads GVTGSGKT. Residues 92 to 115 carry the Beta-hairpin motif; that stretch reads YYDYYQPEAYVPSSDTFIEKDASI. A Helicase C-terminal domain is found at 431-597; sequence QVDDLLSEIR…GLNKKVVDIL (167 aa). The 36-residue stretch at 633-668 folds into the UVR domain; the sequence is QQKIHELEGQMMQHAQNLEFEEAAQIRDQLHQLREL.

Belongs to the UvrB family. Forms a heterotetramer with UvrA during the search for lesions. Interacts with UvrC in an incision complex.

Its subcellular location is the cytoplasm. In terms of biological role, the UvrABC repair system catalyzes the recognition and processing of DNA lesions. A damage recognition complex composed of 2 UvrA and 2 UvrB subunits scans DNA for abnormalities. Upon binding of the UvrA(2)B(2) complex to a putative damaged site, the DNA wraps around one UvrB monomer. DNA wrap is dependent on ATP binding by UvrB and probably causes local melting of the DNA helix, facilitating insertion of UvrB beta-hairpin between the DNA strands. Then UvrB probes one DNA strand for the presence of a lesion. If a lesion is found the UvrA subunits dissociate and the UvrB-DNA preincision complex is formed. This complex is subsequently bound by UvrC and the second UvrB is released. If no lesion is found, the DNA wraps around the other UvrB subunit that will check the other stand for damage. The protein is UvrABC system protein B of Salmonella paratyphi A (strain ATCC 9150 / SARB42).